Reading from the N-terminus, the 875-residue chain is Probable serine/threonine-protein kinase samkC (875 aa).

The segment covering M1–D12 has biased composition (polar residues). The disordered stretch occupies residues M1–N47. The span at N13–N45 shows a compositional bias: low complexity. The region spanning W51–F116 is the SAM domain. Positions D135–N162 form a coiled coil. Residues N136 to N168 show a composition bias toward low complexity. The tract at residues N136–T170 is disordered. The Protein kinase domain occupies Y181–F452. ATP contacts are provided by residues M187–L195 and K210. D301 functions as the Proton acceptor in the catalytic mechanism. Disordered regions lie at residues N331–N362 and S461–N718. Positions P474–S554 are enriched in low complexity. Pro residues predominate over residues E555 to K564. Low complexity-rich tracts occupy residues P565–S581, Q589–T611, and Q617–K653. A coiled-coil region spans residues Q626 to K655. Residues S654–P663 are compositionally biased toward basic and acidic residues. Positions E664 to N718 are enriched in low complexity. Residues T842–L862 traverse the membrane as a helical segment.

The protein belongs to the protein kinase superfamily. Ser/Thr protein kinase family.

The protein resides in the membrane. It catalyses the reaction L-seryl-[protein] + ATP = O-phospho-L-seryl-[protein] + ADP + H(+). The enzyme catalyses L-threonyl-[protein] + ATP = O-phospho-L-threonyl-[protein] + ADP + H(+). The chain is Probable serine/threonine-protein kinase samkC (samkC) from Dictyostelium discoideum (Social amoeba).